The chain runs to 91 residues: Small ribosomal subunit protein uS19 (91 aa).

Belongs to the universal ribosomal protein uS19 family.

Functionally, protein S19 forms a complex with S13 that binds strongly to the 16S ribosomal RNA. The sequence is that of Small ribosomal subunit protein uS19 from Marinomonas sp. (strain MWYL1).